The primary structure comprises 461 residues: Lysosomal proton-coupled steroid conjugate and bile acid symporter SLC46A3 (461 aa).

An N-terminal signal peptide occupies residues 1–25 (MKIPFVEPVICLSVFAVTLNSPLTT). The Extracellular segment spans residues 26 to 70 (QYVYRRIWEETGNYSIALESNTSECAKNKSSPIFAFQEEVQKKVS). Residues asparagine 38, asparagine 46, and asparagine 53 are each glycosylated (N-linked (GlcNAc...) asparagine). The chain crosses the membrane as a helical span at residues 71–91 (LFNLEMDISGLIPGLVSTFVF). Residues 92 to 101 (LSHSDHGGRK) lie on the Cytoplasmic side of the membrane. Residues 102 to 124 (FPLILSSVGALANSAWLCLLSYF) form a helical membrane-spanning segment. Topologically, residues 125–133 (ALPIQLLIA) are extracellular. Residues 134 to 156 (STFIGALFGNYTTFLGASFAYIV) form a helical membrane-spanning segment. The Cytoplasmic portion of the chain corresponds to 157-170 (DQCKEKKQRTIRIA). A helical transmembrane segment spans residues 171 to 191 (IIDFLFGVVSGLTGLSSGYFI). The Extracellular segment spans residues 192–195 (RGLG). A helical membrane pass occupies residues 196–216 (FVWSFLIVTVALFVNLIYILL). Residues 217–261 (FLEDSMKESSSQNISVSWTETFKNLFHRTYMLFKNASGEQQSLCC) are Cytoplasmic-facing. A helical transmembrane segment spans residues 262–282 (LLLFTMITYFFVTIGVSPIFV). The Extracellular segment spans residues 283 to 294 (LYELDSPLCWDE). The helical transmembrane segment at 295–315 (VLIGYGSALGSVTFFSSFLGI) threads the bilayer. The Cytoplasmic portion of the chain corresponds to 316-324 (WLFSYCMED). The helical transmembrane segment at 325–345 (IHMAFIGTFTTMVGMAMTAFA) threads the bilayer. Residues 346–347 (RT) lie on the Extracellular side of the membrane. The helical transmembrane segment at 348–368 (TLMMFLVRLPFLFTVMPLSVL) threads the bilayer. The Cytoplasmic portion of the chain corresponds to 369 to 382 (RSMISKVVHSTEQG). Residues 383 to 403 (TMFACLAFLETLGGITAVSTF) traverse the membrane as a helical segment. Over 404–415 (NGIYSATVAWCK) the chain is Extracellular. The helical transmembrane segment at 416–436 (GFVFLLSAVLLLIPAISLCVI) threads the bilayer. At 437-461 (KYVSRNTGSYVLLIQEESSEDTSDR) the chain is on the cytoplasmic side. Positions 446–449 (YVLL) match the Tyrosine-based lysosomal-sorting motif motif.

The protein belongs to the major facilitator superfamily. SLC46A family.

The protein resides in the lysosome membrane. The enzyme catalyses estrone 3-sulfate(out) + n H(+)(out) = estrone 3-sulfate(in) + n H(+)(in). The catalysed reaction is 25-hydroxyvitamin D3 sulfate(out) + n H(+)(out) = 25-hydroxyvitamin D3 sulfate(in) + n H(+)(in). It catalyses the reaction cholate(out) + n H(+)(out) = cholate(in) + n H(+)(in). It carries out the reaction glycocholate(out) + n H(+)(out) = glycocholate(in) + n H(+)(in). The enzyme catalyses taurocholate(out) + n H(+)(out) = taurocholate(in) + n H(+)(in). The catalysed reaction is dehydroepiandrosterone 3-sulfate(out) + n H(+)(out) = dehydroepiandrosterone 3-sulfate(in) + n H(+)(in). It catalyses the reaction N-acetyl-D-muramoyl-L-alanyl-D-isoglutamine(out) + n H(+)(out) = N-acetyl-D-muramoyl-L-alanyl-D-isoglutamine(in) + n H(+)(in). It carries out the reaction 2',3'-cGAMP(out) + n H(+)(out) = 2',3'-cGAMP(in) + n H(+)(in). Lysosomal proton-coupled steroid conjugate and bile acid transporter. Preferentially recognizes lipophilic steroid conjugates or bile acis as endogenous substrates and seems to mediate escape from lysosomes to the cytoplasm. Modulates hepatic cytosolic copper homeostasis, maybe acting as a lysosomal copper transporter and sequestering copper ions in the lysosome. Delivers pathogen-associated molecular patterns to cytosolic pattern recognition receptors as part of the innate immune response to microbes. Selectively transports bacterial muramyl dipeptide (MDP) into the cytosol for recognition by NOD2, triggering inflammatory responses. Likely acts as a redundant importer of cyclic GMP-AMP dinucleotides (cGAMPs) in monocyte and macrophage cell lineages. The transport mechanism, its electrogenicity and stoichiometry remain to be elucidated. This Bos taurus (Bovine) protein is Lysosomal proton-coupled steroid conjugate and bile acid symporter SLC46A3 (SLC46A3).